The following is a 453-amino-acid chain: MKEKQFWNRILEFAQERLTRSMYDFYAIQAELIKVEENVATIFLPRSEMEMVWEKQLKDIIVVAGFEIYDAEITPHYIFTKPQDTTSSQVEEATNLTLYNYSPKLVSIPYSDTGLKEKYTFDNFIQGDGNVWAVSAALAVSEDLALTYNPLFIYGGPGLGKTHLLNAIGNEILKNIPNARVKYIPAESFINDFLDHLRLGEMEKFKKTYRSLDLLLIDDIQSLSGKKVATQEEFFNTFNALHDKQKQIVLTSDRSPKHLEGLEERLVTRFSWGLTQTITPPDFETRIAILQSKTEHLGYNFQSDTLEYLAGQFDSNVRDLEGAINDITLIARVKKIKDITIDIAAEAIRARKQDVSQMLVIPIDKIQTEVGNFYGVSIKEMKGSRRLQNIVLARQVAMYLSRELTDNSLPKIGKEFGGKDHTTVIHAHAKIKSLIDQDDNLRLEIESIKKKIK.

The domain I, interacts with DnaA modulators stretch occupies residues 1–74 (MKEKQFWNRI…GFEIYDAEIT (74 aa)). Residues 74-113 (TPHYIFTKPQDTTSSQVEEATNLTLYNYSPKLVSIPYSDT) are domain II. A domain III, AAA+ region region spans residues 114 to 331 (GLKEKYTFDN…GAINDITLIA (218 aa)). Residues glycine 158, glycine 160, lysine 161, and threonine 162 each contribute to the ATP site. The segment at 332–453 (RVKKIKDITI…EIESIKKKIK (122 aa)) is domain IV, binds dsDNA.

The protein belongs to the DnaA family. In terms of assembly, oligomerizes as a right-handed, spiral filament on DNA at oriC.

Its subcellular location is the cytoplasm. Plays an essential role in the initiation and regulation of chromosomal replication. ATP-DnaA binds to the origin of replication (oriC) to initiate formation of the DNA replication initiation complex once per cell cycle. Binds the DnaA box (a 9 base pair repeat at the origin) and separates the double-stranded (ds)DNA. Forms a right-handed helical filament on oriC DNA; dsDNA binds to the exterior of the filament while single-stranded (ss)DNA is stabiized in the filament's interior. The ATP-DnaA-oriC complex binds and stabilizes one strand of the AT-rich DNA unwinding element (DUE), permitting loading of DNA polymerase. After initiation quickly degrades to an ADP-DnaA complex that is not apt for DNA replication. Binds acidic phospholipids. The protein is Chromosomal replication initiator protein DnaA of Streptococcus pneumoniae serotype 19F (strain G54).